A 609-amino-acid polypeptide reads, in one-letter code: Dihydroxy-acid dehydratase (609 aa).

A Mg(2+)-binding site is contributed by Asp-81. Cys-122 is a [2Fe-2S] cluster binding site. Residues Asp-123 and Lys-124 each contribute to the Mg(2+) site. The residue at position 124 (Lys-124) is an N6-carboxylysine. Cys-195 is a [2Fe-2S] cluster binding site. Glu-491 lines the Mg(2+) pocket. Ser-517 (proton acceptor) is an active-site residue.

This sequence belongs to the IlvD/Edd family. In terms of assembly, homodimer. [2Fe-2S] cluster is required as a cofactor. Mg(2+) serves as cofactor.

It carries out the reaction (2R)-2,3-dihydroxy-3-methylbutanoate = 3-methyl-2-oxobutanoate + H2O. It catalyses the reaction (2R,3R)-2,3-dihydroxy-3-methylpentanoate = (S)-3-methyl-2-oxopentanoate + H2O. Its pathway is amino-acid biosynthesis; L-isoleucine biosynthesis; L-isoleucine from 2-oxobutanoate: step 3/4. The protein operates within amino-acid biosynthesis; L-valine biosynthesis; L-valine from pyruvate: step 3/4. Functions in the biosynthesis of branched-chain amino acids. Catalyzes the dehydration of (2R,3R)-2,3-dihydroxy-3-methylpentanoate (2,3-dihydroxy-3-methylvalerate) into 2-oxo-3-methylpentanoate (2-oxo-3-methylvalerate) and of (2R)-2,3-dihydroxy-3-methylbutanoate (2,3-dihydroxyisovalerate) into 2-oxo-3-methylbutanoate (2-oxoisovalerate), the penultimate precursor to L-isoleucine and L-valine, respectively. The chain is Dihydroxy-acid dehydratase from Acinetobacter baumannii (strain ATCC 17978 / DSM 105126 / CIP 53.77 / LMG 1025 / NCDC KC755 / 5377).